The chain runs to 418 residues: Inward rectifier potassium channel 16 (418 aa).

Residues Met-1–Asp-67 are Cytoplasmic-facing. The chain crosses the membrane as a helical span at residues Thr-68–Leu-94. The Extracellular portion of the chain corresponds to Ile-95–Ser-117. Positions Phe-118–Tyr-134 form an intramembrane region, helical; Pore-forming. Residues Thr-131–Tyr-136 carry the Selectivity filter motif. Topologically, residues Gly-135 to Cys-143 are extracellular. A helical membrane pass occupies residues Ser-144–Lys-171. The Cytoplasmic segment spans residues Met-172 to Met-418. Phosphoserine is present on residues Ser-373 and Ser-375.

The protein belongs to the inward rectifier-type potassium channel (TC 1.A.2.1) family. KCNJ16 subfamily. In terms of assembly, it forms heteromeric channels with Kir4.1/KCNJ10; this interaction is required for KCNJ16 localization to the basolateral membrane in kidney cells. As a heteromer with KCNJ10, may interact with MAGI1; this interaction may facilitate KCNJ10/KCNJ16 potassium channel expression at the basolateral membrane in kidney cells. May form heteromers with Kir2.1/KCNJ2. Can form heteromeric channels with Kir4.2/KCNJ15. Widely expressed, with highest levels in adult and fetal kidney (at protein level). In the kidney, expressed in the proximal and distal convoluted tubules, but not in glomeruli nor collecting ducts.

The protein localises to the membrane. It localises to the basolateral cell membrane. It carries out the reaction K(+)(in) = K(+)(out). Its activity is regulated as follows. Channel activity is strongly regulated by variations of cytosolic pH; channels are activated by alkaline and inhibited by acidic pH values. Activated by phosphatidylinositol 4,5 biphosphate (PtdIns(4,5)P2). Inward rectifier potassium channels are characterized by a greater tendency to allow potassium to flow into the cell rather than out of it. Their voltage dependence is regulated by the concentration of extracellular potassium; as external potassium is raised, the voltage range of the channel opening shifts to more positive voltages. The inward rectification is mainly due to the blockage of outward current by internal magnesium. KCNJ16 may be involved in the regulation of fluid and pH balance. In the kidney, together with KCNJ10, mediates basolateral K(+) recycling in distal tubules; this process is critical for Na(+) reabsorption at the tubules. In Homo sapiens (Human), this protein is Inward rectifier potassium channel 16 (KCNJ16).